The chain runs to 364 residues: UDP-N-acetylglucosamine--N-acetylmuramyl-(pentapeptide) pyrophosphoryl-undecaprenol N-acetylglucosamine transferase (364 aa).

UDP-N-acetyl-alpha-D-glucosamine contacts are provided by residues 10-12 (TGG), Asn128, Arg170, Ser199, Ile250, and Gln295.

It belongs to the glycosyltransferase 28 family. MurG subfamily.

Its subcellular location is the cell inner membrane. The enzyme catalyses di-trans,octa-cis-undecaprenyl diphospho-N-acetyl-alpha-D-muramoyl-L-alanyl-D-glutamyl-meso-2,6-diaminopimeloyl-D-alanyl-D-alanine + UDP-N-acetyl-alpha-D-glucosamine = di-trans,octa-cis-undecaprenyl diphospho-[N-acetyl-alpha-D-glucosaminyl-(1-&gt;4)]-N-acetyl-alpha-D-muramoyl-L-alanyl-D-glutamyl-meso-2,6-diaminopimeloyl-D-alanyl-D-alanine + UDP + H(+). It participates in cell wall biogenesis; peptidoglycan biosynthesis. Its function is as follows. Cell wall formation. Catalyzes the transfer of a GlcNAc subunit on undecaprenyl-pyrophosphoryl-MurNAc-pentapeptide (lipid intermediate I) to form undecaprenyl-pyrophosphoryl-MurNAc-(pentapeptide)GlcNAc (lipid intermediate II). In Chlorobaculum parvum (strain DSM 263 / NCIMB 8327) (Chlorobium vibrioforme subsp. thiosulfatophilum), this protein is UDP-N-acetylglucosamine--N-acetylmuramyl-(pentapeptide) pyrophosphoryl-undecaprenol N-acetylglucosamine transferase.